The sequence spans 1153 residues: MACPWKFLFKTKFHQYAMNGEKDINNNVEKAPCATSSPVTQDDLQYHNLSKQQNESPQPLVETGKKSPESLVKLDATPLSSPRHVRIKNWGSGMTFQDTLHHKAKGILTCRSKSCLGSIMTPKSLTRGPRDKPTPPDELLPQAIEFVNQYYGSFKEAKIEEHLARVEAVTKEIETTGTYQLTGDELIFATKQAWRNAPRCIGRIQWSNLQVFDARSCSTAREMFEHICRHVRYSTNNGNIRSAITVFPQRSDGKHDFRVWNAQLIRYAGYQMPDGSIRGDPANVEFTQLCIDLGWKPKYGRFDVVPLVLQANGRDPELFEIPPDLVLEVAMEHPKYEWFRELELKWYALPAVANMLLEVGGLEFPGCPFNGWYMGTEIGVRDFCDVQRYNILEEVGRRMGLETHKLASLWKDQAVVEINIAVLHSFQKQNVTIMDHHSAAESFMKYMQNEYRSRGGCPADWIWLVPPMSGSITPVFHQEMLNYVLSPFYYYQVEAWKTHVWQDEKRRPKRREIPLKVLVKAVLFACMLMRKTMASRVRVTILFATETGKSEALAWDLGALFSCAFNPKVVCMDKYRLSCLEEERLLLVVTSTFGNGDCPGNGEKLKKSLFMLKELNNKFRYAVFGLGSSMYPRFCAFAHDIDQKLSHLGASQLTPMGEGDELSGQEDAFRSWAVQTFKAACETFDVRGKQHIQIPKLYTSNVTWDPHHYRLVQDSQPLDLSKALSSMHAKNVFTMRLKSRQNLQSPTSSRATILVELSCEDGQGLNYLPGEHLGVCPGNQPALVQGILERVVDGPTPHQTVRLEALDESGSYWVSDKRLPPCSLSQALTYFLDITTPPTQLLLQKLAQVATEEPERQRLEALCQPSEYSKWKFTNSPTFLEVLEEFPSLRVSAGFLLSQLPILKPRFYSISSSRDHTPTEIHLTVAVVTYHTRDGQGPLHHGVCSTWLNSLKPQDPVPCFVRNASGFHLPEDPSHPCILIGPGTGIAPFRSFWQQRLHDSQHKGVRGGRMTLVFGCRRPDEDHIYQEEMLEMAQKGVLHAVHTAYSRLPGKPKVYVQDILRQQLASEVLRVLHKEPGHLYVCGDVRMARDVAHTLKQLVAAKLKLNEEQVEDYFFQLKSQKRYHEDIFGAVFPYEAKKDRVAVQPSSLEMSAL.

The short motif at Asp-23–Asn-27 is the DINNN-motif; mediates interaction with SPSB1, SPSB2 and SPSB4 element. 2 residues coordinate Zn(2+): Cys-110 and Cys-115. A (6R)-L-erythro-5,6,7,8-tetrahydrobiopterin-binding site is contributed by Ser-118. Cys-200 contributes to the heme b binding site. At Ser-234 the chain carries Phosphoserine; by PKA. Gln-263, Trp-372, Tyr-373, and Glu-377 together coordinate L-arginine. (6R)-L-erythro-5,6,7,8-tetrahydrobiopterin is bound by residues Arg-381, Ile-462, Trp-463, and Phe-476. Tyr-491 contributes to the heme b binding site. Positions Leu-515–Ser-535 are calmodulin-binding. In terms of domain architecture, Flavodoxin-like spans Val-539 to Phe-677. The FMN site is built by Thr-545, Glu-546, Thr-547, Lys-549, and Ser-550. Position 575 is a phosphotyrosine (Tyr-575). Position 578 is a phosphoserine; by PKA (Ser-578). FMN-binding residues include Ser-591, Thr-592, Ser-628, Arg-633, Cys-635, Glu-661, and Gln-665. The FAD-binding FR-type domain maps to Lys-730 to Pro-970. Arg-750 provides a ligand contact to NADP(+). His-772 serves as a coordination point for FAD. Ser-892 carries the phosphoserine; by PKA modification. FAD contacts are provided by Arg-906, Tyr-908, Ser-909, Thr-924, and Ala-926. Thr-929 serves as a coordination point for NADP(+). 4 residues coordinate FAD: Tyr-930, Val-943, Cys-944, and Ser-945. Positions 984, 1017, 1046, 1047, 1053, 1055, 1057, and 1090 each coordinate NADP(+).

This sequence belongs to the NOS family. In terms of assembly, homodimer. Interacts with NHERF1. Interacts with GAPDH; induced by oxidatively-modified low-densitity lipoprotein (LDL(ox)). Interacts with S100A8 and S100A9 to form the iNOS-S100A8/9 transnitrosylase complex. Interacts with SPSB1, SPSB2 and SPSB4. Interacts with ELOC and CUL5 in the presence of SPSB1 or SPSB2 or SPSB4. Forms a complex with ASL, ASS1 and HSP90AA1; the complex regulates cell-autonomous L-arginine synthesis and citrulline recycling while channeling extracellular L-arginine to nitric oxide synthesis pathway. The cofactor is heme b. Requires FAD as cofactor. FMN serves as cofactor. (6R)-L-erythro-5,6,7,8-tetrahydrobiopterin is required as a cofactor. Post-translationally, polyubiquitinated; mediated by SPSB1, SPSB2 and SPSB4, leading to proteasomal degradation. In terms of tissue distribution, expressed in the liver, retina, bone cells and airway epithelial cells of the lung. Not expressed in the platelets. Expressed in chondrocytes.

It is found in the cytoplasm. Its subcellular location is the cytosol. It carries out the reaction 2 L-arginine + 3 NADPH + 4 O2 + H(+) = 2 L-citrulline + 2 nitric oxide + 3 NADP(+) + 4 H2O. With respect to regulation, regulated by calcium/calmodulin. Aspirin inhibits expression and function of this enzyme and effects may be exerted at the level of translational/post-translational modification and directly on the catalytic activity. In terms of biological role, produces nitric oxide (NO) which is a messenger molecule with diverse functions throughout the body. In macrophages, NO mediates tumoricidal and bactericidal actions. Also has nitrosylase activity and mediates cysteine S-nitrosylation of cytoplasmic target proteins such PTGS2/COX2. As component of the iNOS-S100A8/9 transnitrosylase complex involved in the selective inflammatory stimulus-dependent S-nitrosylation of GAPDH on 'Cys-247' implicated in regulation of the GAIT complex activity and probably multiple targets including ANXA5, EZR, MSN and VIM. Involved in inflammation, enhances the synthesis of pro-inflammatory mediators such as IL6 and IL8. The polypeptide is Nitric oxide synthase, inducible (Homo sapiens (Human)).